The primary structure comprises 456 residues: Bifunctional protein GlmU (456 aa).

Residues 1–229 (MLNNAMSVVI…LSEVEGVNNR (229 aa)) form a pyrophosphorylase region. Residues 11-14 (LAAG), K25, Q76, 81-82 (GT), 103-105 (YGD), G140, E154, N169, and N227 each bind UDP-N-acetyl-alpha-D-glucosamine. Mg(2+) is bound at residue D105. Mg(2+) is bound at residue N227. The interval 230 to 250 (LQLSRLERVYQSEQAEKLLLA) is linker. Positions 251-456 (GVMLRDPARF…EGWRRPVKKK (206 aa)) are N-acetyltransferase. Residues R333 and K351 each contribute to the UDP-N-acetyl-alpha-D-glucosamine site. The active-site Proton acceptor is the H363. Positions 366 and 377 each coordinate UDP-N-acetyl-alpha-D-glucosamine. Residues A380, 386–387 (NY), S405, A423, and R440 contribute to the acetyl-CoA site.

This sequence in the N-terminal section; belongs to the N-acetylglucosamine-1-phosphate uridyltransferase family. In the C-terminal section; belongs to the transferase hexapeptide repeat family. In terms of assembly, homotrimer. It depends on Mg(2+) as a cofactor.

It is found in the cytoplasm. It catalyses the reaction alpha-D-glucosamine 1-phosphate + acetyl-CoA = N-acetyl-alpha-D-glucosamine 1-phosphate + CoA + H(+). It carries out the reaction N-acetyl-alpha-D-glucosamine 1-phosphate + UTP + H(+) = UDP-N-acetyl-alpha-D-glucosamine + diphosphate. The protein operates within nucleotide-sugar biosynthesis; UDP-N-acetyl-alpha-D-glucosamine biosynthesis; N-acetyl-alpha-D-glucosamine 1-phosphate from alpha-D-glucosamine 6-phosphate (route II): step 2/2. Its pathway is nucleotide-sugar biosynthesis; UDP-N-acetyl-alpha-D-glucosamine biosynthesis; UDP-N-acetyl-alpha-D-glucosamine from N-acetyl-alpha-D-glucosamine 1-phosphate: step 1/1. It participates in bacterial outer membrane biogenesis; LPS lipid A biosynthesis. Its function is as follows. Catalyzes the last two sequential reactions in the de novo biosynthetic pathway for UDP-N-acetylglucosamine (UDP-GlcNAc). The C-terminal domain catalyzes the transfer of acetyl group from acetyl coenzyme A to glucosamine-1-phosphate (GlcN-1-P) to produce N-acetylglucosamine-1-phosphate (GlcNAc-1-P), which is converted into UDP-GlcNAc by the transfer of uridine 5-monophosphate (from uridine 5-triphosphate), a reaction catalyzed by the N-terminal domain. The polypeptide is Bifunctional protein GlmU (Shigella dysenteriae serotype 1 (strain Sd197)).